The following is a 607-amino-acid chain: Protease Do-like 2, chloroplastic (607 aa).

Residues 41-104 (SSNIKRKSSR…LSDFSRDQQT (64 aa)) form a disordered region. Positions 87-104 (PKKEKKESLSDFSRDQQT) are enriched in basic and acidic residues. Residues 118 to 317 (VVKVYCTHTA…LTDYERNGKY (200 aa)) are serine protease. Residues His159, Asp190, and Ser268 each act as charge relay system in the active site. The 96-residue stretch at 308 to 403 (LTDYERNGKY…YLISQKFAGD (96 aa)) folds into the PDZ domain.

This sequence belongs to the peptidase S1C family.

Its subcellular location is the plastid. The protein localises to the chloroplast thylakoid membrane. In terms of biological role, serine protease that performs the primary cleavage of the photodamaged D1 protein in plant photosystem II. This is Protease Do-like 2, chloroplastic (DEGP2) from Arabidopsis thaliana (Mouse-ear cress).